A 1334-amino-acid chain; its full sequence is Aldehyde oxidase 1 (1334 aa).

The 2Fe-2S ferredoxin-type domain maps to 5–92 (PELLFYVNGR…GAAVTTVEGI (88 aa)). Positions 44, 49, 52, and 74 each coordinate [2Fe-2S] cluster. Gln113 contacts Mo-molybdopterin. 4 residues coordinate [2Fe-2S] cluster: Cys114, Cys117, Cys149, and Cys151. Position 151 (Cys151) interacts with Mo-molybdopterin. The region spanning 236–421 (FSGERMMWIS…ASVHIPYSRK (186 aa)) is the FAD-binding PCMH-type domain. FAD-binding positions include 264 to 271 (VVMGNTSV), Ala345, Ser354, His358, Asp367, and Leu411. Residues 802-803 (AF) and Met1043 contribute to the Mo-molybdopterin site. At Ser1064 the chain carries Phosphoserine. Mo-molybdopterin is bound by residues 1084–1087 (GSVV), Gln1199, and Leu1264. Glu1266 serves as the catalytic Proton acceptor; for azaheterocycle hydroxylase activity.

This sequence belongs to the xanthine dehydrogenase family. In terms of assembly, homodimer. Requires [2Fe-2S] cluster as cofactor. It depends on FAD as a cofactor. Mo-molybdopterin serves as cofactor. The N-terminus is blocked. Very high expression in liver and lung. High expression in kidney, pancreas, brain stem and spinal cord. Moderate expression in heart, testis, eye, cerebral cortex and cerebellum. Low expression in stomach and muscle.

Its subcellular location is the cytoplasm. It carries out the reaction an aldehyde + O2 + H2O = a carboxylate + H2O2 + H(+). It catalyses the reaction retinal + O2 + H2O = retinoate + H2O2 + H(+). The catalysed reaction is all-trans-retinal + O2 + H2O = all-trans-retinoate + H2O2 + H(+). With respect to regulation, inhibited by hydralazine and menadione. Not inhibited by BOF-4272 or allopurinol, xanthine dehydrogenase potent inhibitors. In contrast to guinea pig, human and rat, isovanillin is not an inhibitor but a substrate for AOX1 in rabbit. In terms of biological role, oxidase with broad substrate specificity, oxidizing aromatic azaheterocycles, such as N1-methylnicotinamide, N-methylphthalazinium and phthalazine, as well as aldehydes, such as benzaldehyde, retinal, pyridoxal, and vanillin. Plays a key role in the metabolism of xenobiotics and drugs containing aromatic azaheterocyclic substituents. Participates in the bioactivation of prodrugs such as famciclovir, catalyzing the oxidation step from 6-deoxypenciclovir to penciclovir, which is a potent antiviral agent. Is probably involved in the regulation of reactive oxygen species homeostasis. May be a prominent source of superoxide generation via the one-electron reduction of molecular oxygen. May also catalyze nitric oxide (NO) production via the reduction of nitrite to NO with NADH or aldehyde as electron donor. May play a role in adipogenesis. Cannot use hypoxanthine and all-trans-retinol as substrate. The chain is Aldehyde oxidase 1 from Oryctolagus cuniculus (Rabbit).